A 424-amino-acid polypeptide reads, in one-letter code: UPF0229 protein Avin_46880 (424 aa).

The tract at residues 57–108 (RDIDEPVLHHGRGGKQTIVHPGNKEFTAGERIPRPSGGGGGGSGSGKASNSG) is disordered. A compositionally biased stretch (gly residues) spans 92-101 (SGGGGGGSGS).

Belongs to the UPF0229 family.

The polypeptide is UPF0229 protein Avin_46880 (Azotobacter vinelandii (strain DJ / ATCC BAA-1303)).